Reading from the N-terminus, the 131-residue chain is Profilin-8 (131 aa).

The cysteines at positions 13 and 115 are disulfide-linked. The Involved in PIP2 interaction motif lies at 81–97 (AVIRGKKGAGGITIKKT). Threonine 111 bears the Phosphothreonine mark.

The protein belongs to the profilin family. In terms of assembly, occurs in many kinds of cells as a complex with monomeric actin in a 1:1 ratio. In terms of processing, phosphorylated by MAP kinases.

It is found in the cytoplasm. Its subcellular location is the cytoskeleton. Binds to actin and affects the structure of the cytoskeleton. At high concentrations, profilin prevents the polymerization of actin, whereas it enhances it at low concentrations. The polypeptide is Profilin-8 (Olea europaea (Common olive)).